A 612-amino-acid polypeptide reads, in one-letter code: Threonine--tRNA ligase (612 aa).

Residues 218–509 (DHRKLGVELG…LSEHFWGNFP (292 aa)) form a catalytic region. Zn(2+) is bound by residues Cys-310, His-361, and His-486.

It belongs to the class-II aminoacyl-tRNA synthetase family. Homodimer. Requires Zn(2+) as cofactor.

It is found in the cytoplasm. It carries out the reaction tRNA(Thr) + L-threonine + ATP = L-threonyl-tRNA(Thr) + AMP + diphosphate + H(+). In terms of biological role, catalyzes the attachment of threonine to tRNA(Thr) in a two-step reaction: L-threonine is first activated by ATP to form Thr-AMP and then transferred to the acceptor end of tRNA(Thr). Also edits incorrectly charged L-seryl-tRNA(Thr). The polypeptide is Threonine--tRNA ligase (Helicobacter acinonychis (strain Sheeba)).